The chain runs to 426 residues: Enolase (426 aa).

Gln-163 serves as a coordination point for (2R)-2-phosphoglycerate. The Proton donor role is filled by Glu-205. Asp-242, Glu-283, and Asp-310 together coordinate Mg(2+). Lys-335, Arg-364, Ser-365, and Lys-386 together coordinate (2R)-2-phosphoglycerate. Lys-335 functions as the Proton acceptor in the catalytic mechanism.

Belongs to the enolase family. It depends on Mg(2+) as a cofactor.

It is found in the cytoplasm. The protein resides in the secreted. It localises to the cell surface. The catalysed reaction is (2R)-2-phosphoglycerate = phosphoenolpyruvate + H2O. Its pathway is carbohydrate degradation; glycolysis; pyruvate from D-glyceraldehyde 3-phosphate: step 4/5. Functionally, catalyzes the reversible conversion of 2-phosphoglycerate (2-PG) into phosphoenolpyruvate (PEP). It is essential for the degradation of carbohydrates via glycolysis. In Leifsonia xyli subsp. xyli (strain CTCB07), this protein is Enolase.